We begin with the raw amino-acid sequence, 113 residues long: MTTIQFIQGIDEEVTPEVRLTRSRSGNQGTATLIFEDPKALGQDVTQEITGMYMIDEEGQITSRDVKARFVNGQPKFLEGLYVMKTKQEWERFMRFMESYAKEHDLGFKKAKA.

It belongs to the Psb28 family. As to quaternary structure, part of the photosystem II complex.

Its subcellular location is the cellular thylakoid membrane. This Trichodesmium erythraeum (strain IMS101) protein is Photosystem II reaction center Psb28 protein.